A 2410-amino-acid chain; its full sequence is Reducing polyketide synthase FUB1 (2410 aa).

Over residues 1-42 the composition is skewed to low complexity; sequence MTLSNGSNGANGTSNGNGAHPSANGFHNAANGGANNGSANGG. The segment at 1–52 is disordered; sequence MTLSNGSNGANGTSNGNGAHPSANGFHNAANGGANNGSANGGAEHDAGRPQV. The 423-residue stretch at 57-479 folds into the Ketosynthase family 3 (KS3) domain; that stretch reads SSAIAVIGVS…GANAHAVLDD (423 aa). Residues Cys-230, His-365, and His-403 each act as for beta-ketoacyl synthase activity in the active site. The tract at residues 608-929 is malonyl-CoA:ACP transacylase (MAT) domain; the sequence is TFIFTGQGAQ…FSAIKRKQDA (322 aa). Ser-699 (for malonyltransferase activity) is an active-site residue. The interval 994-1127 is N-terminal hotdog fold; the sequence is LELLGVRDPR…GLVSTSYKHD (134 aa). The 314-residue stretch at 994–1307 folds into the PKS/mFAS DH domain; sequence LELLGVRDPR…TVPLRGASDS (314 aa). The dehydratase (DH) domain stretch occupies residues 995-1302; it reads ELLGVRDPRS…LKGCKTVPLR (308 aa). The active-site Proton acceptor; for dehydratase activity is His-1026. A C-terminal hotdog fold region spans residues 1155 to 1307; sequence LPSVDPTVFY…TVPLRGASDS (153 aa). Asp-1220 acts as the Proton donor; for dehydratase activity in catalysis. An enoyl reductase (ER) domain region spans residues 1714 to 2026; it reads GLLDTLEYLS…SGGHVGKIVL (313 aa). The tract at residues 2050-2226 is ketoreductase (KR) domain; that stretch reads ATYVLIGGLG…AATSINLSLV (177 aa). One can recognise a Carrier domain in the interval 2329–2406; that stretch reads EVYEIVLQQL…GFTKKVMAKS (78 aa). Ser-2366 is subject to O-(pantetheine 4'-phosphoryl)serine.

It functions in the pathway mycotoxin biosynthesis. Its function is as follows. Reducing polyketide synthase; part of the gene cluster that mediates the biosynthesis of fusaric acid, a mycotoxin with low to moderate toxicity to animals and humans, but with high phytotoxic properties. L-aspartate is suggested as fusaric acid amino acid precursor that is activated and further processed to O-acetyl-L-homoserine by cluster enzymes aspartate kinase FUB3 and homoserine O-acetyltransferase FUB5, as well as enzymes of the primary metabolism. The polyketide synthase (PKS) FUB1 generates the triketide trans-2-hexenal which is presumptively released by the hydrolase FUB4 and linked to the NRPS-bound amino acid precursor by NAD(P)-dependent dehydrogenase FUB6. FUB1, FUB4, and the non-canonical NRPS Fub8 may form an enzyme complex. Further processing of the NRPS-bound intermediate might be carried out by FUB6 and the sulfhydrylase FUB7, enabling a spontaneous electrocyclization to close the carbon backbone of fusaric acid. Dihydrofusaric acid is likely to be released via reduction by the thioester reductase (TR) domain of FUB8 whereupon the final oxidation to fusaric acid may (also) be performed by the FMN-dependent dehydrogenase FUB9. The polypeptide is Reducing polyketide synthase FUB1 (Gibberella fujikuroi (strain CBS 195.34 / IMI 58289 / NRRL A-6831) (Bakanae and foot rot disease fungus)).